A 335-amino-acid chain; its full sequence is Aliphatic sulfonates import ATP-binding protein SsuB (335 aa).

The interval 29-61 (DGDAQDAAVYERDGGAHAPPFASGGAPPDGDRA) is disordered. The ABC transporter domain occupies 74 to 293 (VRLTRVSKRY…ARASAAFAAL (220 aa)). ATP is bound at residue 106–113 (GRSGCGKS). The interval 308–335 (APAAPNAAGPEGASRGRAAPASGLRWAV) is disordered.

This sequence belongs to the ABC transporter superfamily. Aliphatic sulfonates importer (TC 3.A.1.17.2) family. As to quaternary structure, the complex is composed of two ATP-binding proteins (SsuB), two transmembrane proteins (SsuC) and a solute-binding protein (SsuA).

It is found in the cell inner membrane. It carries out the reaction ATP + H2O + aliphatic sulfonate-[sulfonate-binding protein]Side 1 = ADP + phosphate + aliphatic sulfonateSide 2 + [sulfonate-binding protein]Side 1.. Part of the ABC transporter complex SsuABC involved in aliphatic sulfonates import. Responsible for energy coupling to the transport system. The polypeptide is Aliphatic sulfonates import ATP-binding protein SsuB (Burkholderia pseudomallei (strain 1710b)).